The primary structure comprises 87 residues: Developmentally-regulated ectodermal protein (87 aa).

Residues 1 to 16 form the signal peptide; that stretch reads MKRLLVLTLVSAILMA.

The polypeptide is Developmentally-regulated ectodermal protein (Tripneustes gratilla (Hawaian sea urchin)).